The chain runs to 60 residues: Potassium channel toxin alpha-KTx 29.2 (60 aa).

The N-terminal stretch at 1–28 (MKSVCGVLIILVVLTTMLSISTFSTVGA) is a signal peptide. Intrachain disulfides connect C32-C51, C40-C56, and C44-C58.

This sequence belongs to the short scorpion toxin superfamily. Potassium channel inhibitor family. Alpha-KTx 29 subfamily. As to expression, expressed by the venom gland.

Its subcellular location is the secreted. Functionally, weakly inhibits the Kv1.3/KCNA3 channel (1 uM of thetoxin inhibits currents by 13.2%) and Kv7.1/KCNQ1 channel (10 uM of the toxin inhibits currents by 27.7%). In Lychas mucronatus (Chinese swimming scorpion), this protein is Potassium channel toxin alpha-KTx 29.2.